The primary structure comprises 266 residues: Family of serine hydrolases 3 (266 aa).

Catalysis depends on charge relay system residues Ser117, Asp180, and His209.

Belongs to the AB hydrolase 3 family.

Its function is as follows. Serine hydrolase of unknown specificity. The polypeptide is Family of serine hydrolases 3 (FSH3) (Saccharomyces cerevisiae (strain ATCC 204508 / S288c) (Baker's yeast)).